The chain runs to 417 residues: CinA-like protein (417 aa).

The protein belongs to the CinA family.

The protein is CinA-like protein of Microcystis aeruginosa (strain NIES-843 / IAM M-2473).